A 72-amino-acid chain; its full sequence is MKAGIHPEYKAVSATCSCGNSFEFKSTLDKESIHLDVCDKCHPFYTGKQRIVDTGGRVDRFNKRFGALSSKK.

Residues Cys-16, Cys-18, Cys-38, and Cys-41 each contribute to the Zn(2+) site.

The protein belongs to the bacterial ribosomal protein bL31 family. Type A subfamily. Part of the 50S ribosomal subunit. Requires Zn(2+) as cofactor.

Functionally, binds the 23S rRNA. In Vibrio campbellii (strain ATCC BAA-1116), this protein is Large ribosomal subunit protein bL31.